The following is a 226-amino-acid chain: 2-dehydro-3-deoxy-phosphogluconate aldolase (226 aa).

The Proton acceptor role is filled by Glu-57. Residues Arg-61, Thr-85, and Lys-145 each contribute to the pyruvate site. Lys-145 acts as the Schiff-base intermediate with substrate in catalysis.

This sequence belongs to the KHG/KDPG aldolase family. As to quaternary structure, homotrimer.

The catalysed reaction is 2-dehydro-3-deoxy-6-phospho-D-gluconate = D-glyceraldehyde 3-phosphate + pyruvate. It participates in carbohydrate acid metabolism; 2-dehydro-3-deoxy-D-gluconate degradation; D-glyceraldehyde 3-phosphate and pyruvate from 2-dehydro-3-deoxy-D-gluconate: step 2/2. Its function is as follows. Involved in the degradation of glucose via the Entner-Doudoroff pathway. Catalyzes the reversible, stereospecific retro-aldol cleavage of 2-keto-3-deoxy-6-phosphogluconate (KDPG) to pyruvate and D-glyceraldehyde-3-phosphate. This Pseudomonas putida (Arthrobacter siderocapsulatus) protein is 2-dehydro-3-deoxy-phosphogluconate aldolase.